Consider the following 195-residue polypeptide: ATP-dependent Clp protease proteolytic subunit (195 aa).

Ser99 functions as the Nucleophile in the catalytic mechanism. Residue His124 is part of the active site.

It belongs to the peptidase S14 family. Fourteen ClpP subunits assemble into 2 heptameric rings which stack back to back to give a disk-like structure with a central cavity, resembling the structure of eukaryotic proteasomes.

The protein resides in the cytoplasm. It catalyses the reaction Hydrolysis of proteins to small peptides in the presence of ATP and magnesium. alpha-casein is the usual test substrate. In the absence of ATP, only oligopeptides shorter than five residues are hydrolyzed (such as succinyl-Leu-Tyr-|-NHMec, and Leu-Tyr-Leu-|-Tyr-Trp, in which cleavage of the -Tyr-|-Leu- and -Tyr-|-Trp bonds also occurs).. Its function is as follows. Cleaves peptides in various proteins in a process that requires ATP hydrolysis. Has a chymotrypsin-like activity. Plays a major role in the degradation of misfolded proteins. The polypeptide is ATP-dependent Clp protease proteolytic subunit (Carboxydothermus hydrogenoformans (strain ATCC BAA-161 / DSM 6008 / Z-2901)).